The following is a 358-amino-acid chain: Peptide chain release factor 1 (358 aa).

Glutamine 233 carries the post-translational modification N5-methylglutamine.

Belongs to the prokaryotic/mitochondrial release factor family. In terms of processing, methylated by PrmC. Methylation increases the termination efficiency of RF1.

The protein resides in the cytoplasm. Peptide chain release factor 1 directs the termination of translation in response to the peptide chain termination codons UAG and UAA. The sequence is that of Peptide chain release factor 1 from Clostridium botulinum (strain ATCC 19397 / Type A).